The primary structure comprises 152 residues: ASP external chaperone (152 aa).

The N-terminal stretch at 1–22 (MNKPVTLLLATLLAPLSGQLCA) is a signal peptide.

As to quaternary structure, forms a complex with the serine protease ASP in the periplasm. After translocation of the ASP-ORF2 complex from the periplasm to the extracellular space, the complex is dissociated in a pH-dependent manner.

It is found in the periplasm. It localises to the secreted. Its activity is regulated as follows. Degraded by ASP after secretion and dissociation of the ASP-ORF2 complex. Required for the production of the active form of the Aeromonas extracellular serine protease (ASP). Acts as a chaperone that helps ASP form an active structure in the periplasm. Formation of a complex with ASP in the periplasm also inactivates the protease activity and likely protects ASP from intrinsic proteases. Dissociation of the ASP-ORF2 complex after secretion in the extracellular space generates an active ASP. The protein is ASP external chaperone of Aeromonas sobria.